We begin with the raw amino-acid sequence, 908 residues long: 26S proteasome non-ATPase regulatory subunit 2 (908 aa).

An N-acetylmethionine modification is found at Met1. Positions Met1–Gln51 are disordered. Phosphothreonine is present on residues Thr9 and Thr20. Residues Pro10–Ser22 show a composition bias toward polar residues. The segment covering Ala24 to Gln51 has biased composition (basic and acidic residues). 2 positions are modified to phosphoserine: Ser29 and Ser147. Tyr194 is modified (phosphotyrosine). Phosphoserine is present on residues Ser361 and Ser363. PC repeat units lie at residues Ser409–Ser442, Gly443–Leu479, Gly480–Val514, Val517–Lys551, and Leu560–Ser589. Lys551 is modified (N6-acetyllysine). A compositionally biased stretch (basic and acidic residues) spans Lys623–Pro643. A disordered region spans residues Lys623–Asp645. 2 PC repeats span residues Leu692 to Tyr723 and Ala742 to Asn757. The required for interaction with UBLCP1 stretch occupies residues Asp708–Asn903.

This sequence belongs to the proteasome subunit S2 family. In terms of assembly, component of the 19S proteasome regulatory particle complex. The 26S proteasome consists of a 20S core particle (CP) and two 19S regulatory subunits (RP). The regulatory particle is made of a lid composed of 9 subunits, a base containing 6 ATPases and few additional components including PSMD2. Interacts with RPGRIP1L. Interacts with CRY1 in a KDM8-dependent manner. Interacts (via C-terminus) with phosphatase UBLCP1 (via ubiquitin-like domain); the interaction recruits UBLCP1 to the 19S regulatory particle where it dephosphorylates 19S subunit PSMC2/RPT1 which impairs PSMC2 ATPase activity and disrupts 26S proteasome assembly.

Component of the 26S proteasome, a multiprotein complex involved in the ATP-dependent degradation of ubiquitinated proteins. This complex plays a key role in the maintenance of protein homeostasis by removing misfolded or damaged proteins, which could impair cellular functions, and by removing proteins whose functions are no longer required. Therefore, the proteasome participates in numerous cellular processes, including cell cycle progression, apoptosis, or DNA damage repair. Its function is as follows. Binds to the intracellular domain of tumor necrosis factor type 1 receptor. The binding domain of TRAP1 and TRAP2 resides outside the death domain of TNFR1. The protein is 26S proteasome non-ATPase regulatory subunit 2 (Psmd2) of Mus musculus (Mouse).